The sequence spans 124 residues: Aspartate 1-decarboxylase (124 aa).

Serine 25 (schiff-base intermediate with substrate; via pyruvic acid) is an active-site residue. Serine 25 is modified (pyruvic acid (Ser)). Substrate is bound at residue threonine 57. The active-site Proton donor is the tyrosine 58. Position 73–75 (glycine 73–alanine 75) interacts with substrate.

Belongs to the PanD family. In terms of assembly, heterooctamer of four alpha and four beta subunits. The cofactor is pyruvate. Post-translationally, is synthesized initially as an inactive proenzyme, which is activated by self-cleavage at a specific serine bond to produce a beta-subunit with a hydroxyl group at its C-terminus and an alpha-subunit with a pyruvoyl group at its N-terminus.

It localises to the cytoplasm. The catalysed reaction is L-aspartate + H(+) = beta-alanine + CO2. The protein operates within cofactor biosynthesis; (R)-pantothenate biosynthesis; beta-alanine from L-aspartate: step 1/1. Its function is as follows. Catalyzes the pyruvoyl-dependent decarboxylation of aspartate to produce beta-alanine. The chain is Aspartate 1-decarboxylase from Syntrophobacter fumaroxidans (strain DSM 10017 / MPOB).